Reading from the N-terminus, the 832-residue chain is Protein P (832 aa).

The terminal protein domain (TP) stretch occupies residues 1 to 177 (MPLSYQHFRK…FCGSPYSWEQ (177 aa)). The spacer stretch occupies residues 178–335 (ELQHGAESFN…HCLSHLVNLL (158 aa)). Polar residues-rich tracts occupy residues 205-220 (SKHQ…QQGQ) and 251-263 (SGHN…ESAS). The tract at residues 205–263 (SKHQQSRLGLQPQQGQLAKGQRGRSGSVRSRAHSATRRSVGVEPSGSGHNNNSASESAS) is disordered. A polymerase/reverse transcriptase domain (RT) region spans residues 336 to 679 (EDWGPCTEHG…YATLYPVARQ (344 aa)). The Reverse transcriptase domain occupies 346-589 (KHHIRIPRTP…YSLNFMGYVI (244 aa)). Mg(2+) is bound by residues D418, D540, and D541.

Belongs to the hepadnaviridae P protein family.

The catalysed reaction is DNA(n) + a 2'-deoxyribonucleoside 5'-triphosphate = DNA(n+1) + diphosphate. It catalyses the reaction Endonucleolytic cleavage to 5'-phosphomonoester.. Its activity is regulated as follows. Activated by host HSP70 and HSP40 in vitro to be able to bind the epsilon loop of the pgRNA. Because deletion of the RNase H region renders the protein partly chaperone-independent, the chaperones may be needed indirectly to relieve occlusion of the RNA-binding site by this domain. Inhibited by several reverse-transcriptase inhibitors: Lamivudine, Adefovir and Entecavir. In terms of biological role, multifunctional enzyme that converts the viral RNA genome into dsDNA in viral cytoplasmic capsids. This enzyme displays a DNA polymerase activity that can copy either DNA or RNA templates, and a ribonuclease H (RNase H) activity that cleaves the RNA strand of RNA-DNA heteroduplexes in a partially processive 3'- to 5'-endonucleasic mode. Neo-synthesized pregenomic RNA (pgRNA) are encapsidated together with the P protein, and reverse-transcribed inside the nucleocapsid. Initiation of reverse-transcription occurs first by binding the epsilon loop on the pgRNA genome, and is initiated by protein priming, thereby the 5'-end of (-)DNA is covalently linked to P protein. Partial (+)DNA is synthesized from the (-)DNA template and generates the relaxed circular DNA (RC-DNA) genome. After budding and infection, the RC-DNA migrates in the nucleus, and is converted into a plasmid-like covalently closed circular DNA (cccDNA). The activity of P protein does not seem to be necessary for cccDNA generation, and is presumably released from (+)DNA by host nuclear DNA repair machinery. This Gorilla gorilla (western gorilla) protein is Protein P.